The primary structure comprises 316 residues: Methionyl-tRNA formyltransferase (316 aa).

109–112 (SLLP) contacts (6S)-5,6,7,8-tetrahydrofolate.

Belongs to the Fmt family.

The enzyme catalyses L-methionyl-tRNA(fMet) + (6R)-10-formyltetrahydrofolate = N-formyl-L-methionyl-tRNA(fMet) + (6S)-5,6,7,8-tetrahydrofolate + H(+). Its function is as follows. Attaches a formyl group to the free amino group of methionyl-tRNA(fMet). The formyl group appears to play a dual role in the initiator identity of N-formylmethionyl-tRNA by promoting its recognition by IF2 and preventing the misappropriation of this tRNA by the elongation apparatus. This chain is Methionyl-tRNA formyltransferase, found in Idiomarina loihiensis (strain ATCC BAA-735 / DSM 15497 / L2-TR).